The following is a 77-amino-acid chain: Small ribosomal subunit protein bS18 (77 aa).

This sequence belongs to the bacterial ribosomal protein bS18 family. As to quaternary structure, part of the 30S ribosomal subunit. Forms a tight heterodimer with protein bS6.

Functionally, binds as a heterodimer with protein bS6 to the central domain of the 16S rRNA, where it helps stabilize the platform of the 30S subunit. This chain is Small ribosomal subunit protein bS18, found in Bacillus cytotoxicus (strain DSM 22905 / CIP 110041 / 391-98 / NVH 391-98).